The primary structure comprises 330 residues: 4-hydroxythreonine-4-phosphate dehydrogenase (330 aa).

2 residues coordinate substrate: histidine 135 and threonine 136. A divalent metal cation-binding residues include histidine 165, histidine 210, and histidine 266. Positions 274, 283, and 292 each coordinate substrate.

The protein belongs to the PdxA family. Homodimer. Requires Zn(2+) as cofactor. Mg(2+) is required as a cofactor. The cofactor is Co(2+).

Its subcellular location is the cytoplasm. It carries out the reaction 4-(phosphooxy)-L-threonine + NAD(+) = 3-amino-2-oxopropyl phosphate + CO2 + NADH. It participates in cofactor biosynthesis; pyridoxine 5'-phosphate biosynthesis; pyridoxine 5'-phosphate from D-erythrose 4-phosphate: step 4/5. In terms of biological role, catalyzes the NAD(P)-dependent oxidation of 4-(phosphooxy)-L-threonine (HTP) into 2-amino-3-oxo-4-(phosphooxy)butyric acid which spontaneously decarboxylates to form 3-amino-2-oxopropyl phosphate (AHAP). The polypeptide is 4-hydroxythreonine-4-phosphate dehydrogenase (Vibrio cholerae serotype O1 (strain ATCC 39315 / El Tor Inaba N16961)).